A 176-amino-acid chain; its full sequence is Probable superoxide oxidase CybB (176 aa).

The next 4 membrane-spanning stretches (helical) occupy residues C7–I27, I44–L64, V85–L105, and H137–L157. Residues H13 and H45 each contribute to the heme b site. H137 and H151 together coordinate heme b.

This sequence belongs to the cytochrome b561 family. Heme b is required as a cofactor.

The protein localises to the cell inner membrane. The catalysed reaction is a ubiquinol + 2 O2 = 2 superoxide + a ubiquinone + 2 H(+). B-type di-heme cytochrome. Catalyzes the oxidation of superoxide to molecular oxygen and transfers the extracted electrons to ubiquinone through the two hemes. The sequence is that of Probable superoxide oxidase CybB (cybB) from Yersinia pestis.